Reading from the N-terminus, the 226-residue chain is Orotidine 5'-phosphate decarboxylase (226 aa).

Substrate-binding positions include Asp9, Lys31, 58–67 (DLKLYDIPNT), Thr115, Arg176, Gln184, Gly204, and Arg205. Lys60 functions as the Proton donor in the catalytic mechanism.

This sequence belongs to the OMP decarboxylase family. Type 1 subfamily. Homodimer.

The enzyme catalyses orotidine 5'-phosphate + H(+) = UMP + CO2. It functions in the pathway pyrimidine metabolism; UMP biosynthesis via de novo pathway; UMP from orotate: step 2/2. Catalyzes the decarboxylation of orotidine 5'-monophosphate (OMP) to uridine 5'-monophosphate (UMP). The polypeptide is Orotidine 5'-phosphate decarboxylase (Wolbachia pipientis subsp. Culex pipiens (strain wPip)).